We begin with the raw amino-acid sequence, 191 residues long: Holliday junction branch migration complex subunit RuvA (191 aa).

Residues 1–64 (MIRGVRGTLV…EDELALYGFA (64 aa)) form a domain I region. The tract at residues 65-136 (TEAELELFLS…ELRGRLPALT (72 aa)) is domain II. The flexible linker stretch occupies residues 136–139 (TEVQ). Residues 140–191 (AGEPIDQELVAALQALGYTAQEARQAATHPEVRRAPSLEERIVAALRQLAPP) are domain III.

The protein belongs to the RuvA family. As to quaternary structure, homotetramer. Forms an RuvA(8)-RuvB(12)-Holliday junction (HJ) complex. HJ DNA is sandwiched between 2 RuvA tetramers; dsDNA enters through RuvA and exits via RuvB. An RuvB hexamer assembles on each DNA strand where it exits the tetramer. Each RuvB hexamer is contacted by two RuvA subunits (via domain III) on 2 adjacent RuvB subunits; this complex drives branch migration. In the full resolvosome a probable DNA-RuvA(4)-RuvB(12)-RuvC(2) complex forms which resolves the HJ.

Its subcellular location is the cytoplasm. The RuvA-RuvB-RuvC complex processes Holliday junction (HJ) DNA during genetic recombination and DNA repair, while the RuvA-RuvB complex plays an important role in the rescue of blocked DNA replication forks via replication fork reversal (RFR). RuvA specifically binds to HJ cruciform DNA, conferring on it an open structure. The RuvB hexamer acts as an ATP-dependent pump, pulling dsDNA into and through the RuvAB complex. HJ branch migration allows RuvC to scan DNA until it finds its consensus sequence, where it cleaves and resolves the cruciform DNA. The sequence is that of Holliday junction branch migration complex subunit RuvA from Thermomicrobium roseum (strain ATCC 27502 / DSM 5159 / P-2).